Here is a 321-residue protein sequence, read N- to C-terminus: Auxin-responsive protein IAA8 (321 aa).

The EAR-like (transcriptional repression) motif lies at 54 to 58 (LRLGL). Positions 199 to 301 (VLFVKVSMDG…TCQKLKIMKG (103 aa)) constitute a PB1 domain.

Belongs to the Aux/IAA family. In terms of assembly, homodimers and heterodimers. Interacts with TPL. As to expression, highly expressed in the whole plant.

It localises to the nucleus. Aux/IAA proteins are short-lived transcriptional factors that function as repressors of early auxin response genes at low auxin concentrations. Repression is thought to result from the interaction with auxin response factors (ARFs), proteins that bind to the auxin-responsive promoter element (AuxRE). Formation of heterodimers with ARF proteins may alter their ability to modulate early auxin response genes expression. This is Auxin-responsive protein IAA8 (IAA8) from Arabidopsis thaliana (Mouse-ear cress).